A 284-amino-acid polypeptide reads, in one-letter code: N-methyltransferase sirN (284 aa).

The protein belongs to the methyltransferase superfamily. LaeA methyltransferase family.

It participates in mycotoxin biosynthesis. In terms of biological role, N-methyltransferase; part of the gene cluster that mediates the biosynthesis of sirodesmin PL, an epipolythiodioxopiperazine (ETP) characterized by a disulfide bridged cyclic dipeptide and that acts as a phytotoxin which is involved in the blackleg didease of canola. SirD catalyzes the O-prenylation of L-tyrosine (L-Tyr) in the presence of dimethylallyl diphosphate (DMAPP) to yield 4-O-dimethylallyl-L-Tyr, and therefore represents probably the first pathway-specific enzyme in the biosynthesis of sirodesmin PL. 4-O-dimethylallyl-L-Tyr, then undergoes condensation with L-Ser in a reaction catalyzed by the non-ribosomal peptide synthase sirP to form the diketopiperazine (DKP) backbone. Further bishydroxylation of the DKP performed by the cytochrome P450 monooxygenase sirC leads to the production of the intermediate phomamide. This step is essential to form the reactive thiol group required for toxicity of sirodesmin PL. The next steps of sirodesmin biosynthesis are not well understood yet but some predictions could be made from intermediate compounds identification. Phomamide is converted into phomalizarine via oxidation, probably by sirT. Further oxidation, methylation (by sirM or sirN) and reduction steps convert phomalizarine to deacetyl sirodesmin. Finally, acetyltransferase sirH probably acetylates deacetyl sirodesmin to produce sirodesmin PL. The protein is N-methyltransferase sirN of Leptosphaeria maculans (Blackleg fungus).